Consider the following 64-residue polypeptide: Probable cytochrome c oxidase subunit 5C-1 (64 aa).

The helical transmembrane segment at 15 to 34 threads the bilayer; that stretch reads SVVKELFIGLALGLAAGGLW.

This sequence belongs to the cytochrome c oxidase subunit 5C family.

The protein resides in the mitochondrion inner membrane. This protein is one of the nuclear-coded polypeptide chains of cytochrome c oxidase, the terminal oxidase in mitochondrial electron transport. This chain is Probable cytochrome c oxidase subunit 5C-1, found in Arabidopsis thaliana (Mouse-ear cress).